The chain runs to 338 residues: Ornithine carbamoyltransferase (338 aa).

Carbamoyl phosphate is bound by residues serine 56–threonine 59, arginine 107, and histidine 134–glutamine 137. Residues asparagine 168, aspartate 232, and serine 236 to methionine 237 contribute to the L-ornithine site. Carbamoyl phosphate contacts are provided by residues cysteine 274–leucine 275 and arginine 320.

This sequence belongs to the aspartate/ornithine carbamoyltransferase superfamily. OTCase family.

It is found in the cytoplasm. The enzyme catalyses carbamoyl phosphate + L-ornithine = L-citrulline + phosphate + H(+). It functions in the pathway amino-acid degradation; L-arginine degradation via ADI pathway; carbamoyl phosphate from L-arginine: step 2/2. Its function is as follows. Reversibly catalyzes the transfer of the carbamoyl group from carbamoyl phosphate (CP) to the N(epsilon) atom of ornithine (ORN) to produce L-citrulline. This chain is Ornithine carbamoyltransferase, found in Buchnera aphidicola subsp. Acyrthosiphon pisum (strain 5A).